A 477-amino-acid chain; its full sequence is Ribulose bisphosphate carboxylase large chain (477 aa).

The propeptide occupies 1–2 (MS). Pro3 is subject to N-acetylproline. At Lys14 the chain carries N6,N6,N6-trimethyllysine. Substrate is bound by residues Asn123 and Thr173. Lys175 (proton acceptor) is an active-site residue. Lys177 provides a ligand contact to substrate. The Mg(2+) site is built by Lys201, Asp203, and Glu204. Lys201 bears the N6-carboxylysine mark. His294 serves as the catalytic Proton acceptor. 3 residues coordinate substrate: Arg295, His327, and Ser379.

This sequence belongs to the RuBisCO large chain family. Type I subfamily. Heterohexadecamer of 8 large chains and 8 small chains; disulfide-linked. The disulfide link is formed within the large subunit homodimers. Mg(2+) is required as a cofactor. Post-translationally, the disulfide bond which can form in the large chain dimeric partners within the hexadecamer appears to be associated with oxidative stress and protein turnover.

Its subcellular location is the plastid. It catalyses the reaction 2 (2R)-3-phosphoglycerate + 2 H(+) = D-ribulose 1,5-bisphosphate + CO2 + H2O. The enzyme catalyses D-ribulose 1,5-bisphosphate + O2 = 2-phosphoglycolate + (2R)-3-phosphoglycerate + 2 H(+). Functionally, ruBisCO catalyzes two reactions: the carboxylation of D-ribulose 1,5-bisphosphate, the primary event in carbon dioxide fixation, as well as the oxidative fragmentation of the pentose substrate in the photorespiration process. Both reactions occur simultaneously and in competition at the same active site. The protein is Ribulose bisphosphate carboxylase large chain (rbcL) of Lathraea clandestina (Purple toothwort).